We begin with the raw amino-acid sequence, 615 residues long: Cilia- and flagella-associated protein 52 (615 aa).

WD repeat units lie at residues 54–98, 101–142, 145–184, 232–275, 320–359, 362–401, 405–444, 449–488, 490–529, 533–572, and 575–614; these read GHSD…LIHR, LHKV…AICG, CNTNFTNCVKFFNNSPDKLITAGNFNMNVWTYDAGNNKLR, GPAK…AGTK, AHNDKINGMAFPNEYSEVFATCGTGFIRLWHLTTCRELLR, VPNLECFCIAFTTDGSAILSGWSDGKIRAFGPQSGKIIFT, AHQKAVTAIASTADSSRILSGGEEGMVRVWRIGRTSQTLE, DHKGPVNCIRIKGSGDECVSASSDGSCILWDLHTFKRRTS, FANTFFKSVVYHPDESQLVTAGTDRKVTYWDAYDGNAIRI, SDLDEVNALAVDRDGEALVSGGGDKLVKLWGYDEGHCYFV, and AHSGAITAVGVTPDKQRIVSVGTEGGIFIWDYQRPQTLAD.

Belongs to the CFAP52 family.

It localises to the cytoplasm. The protein resides in the cell projection. It is found in the cilium. The protein localises to the flagellum. In terms of biological role, may play a role in cell growth and/or survival. This chain is Cilia- and flagella-associated protein 52, found in Chlamydomonas reinhardtii (Chlamydomonas smithii).